The sequence spans 170 residues: Single-stranded DNA-binding protein (170 aa).

Positions 1-26 (MSNELKQVEQTEEAVVVSETKDYIKV) are oligomerization.

It belongs to the phi29likevirus single-strand-binding protein family. In terms of assembly, hexamer.

In terms of biological role, single-stranded DNA-binding protein required for the elongation during viral DNA replication by strand displacement. Displaced viral DNA strands are transiently coated with the ssDNA-binding protein and therefore protected againt nucleases. The latter is then probably removed by the replisome that performs lagging strand synthesis or during the events that lead up to the recombination process. Has helix-destabilizing activity since it removes secondary structure from the ssDNA in replicative intermediates. The chain is Single-stranded DNA-binding protein from Bacillus subtilis (Bacteriophage GA-1).